A 60-amino-acid chain; its full sequence is Large ribosomal subunit protein uL30 (60 aa).

It belongs to the universal ribosomal protein uL30 family. As to quaternary structure, part of the 50S ribosomal subunit.

This is Large ribosomal subunit protein uL30 from Dechloromonas aromatica (strain RCB).